Here is a 488-residue protein sequence, read N- to C-terminus: Alkaline nuclease (488 aa).

This sequence belongs to the herpesviridae alkaline nuclease family. Interacts with major DNA-binding protein; this interaction increases the nuclease processivity of the alkaline exonuclease.

The protein resides in the host nucleus. It localises to the host cytoplasm. Its function is as follows. Plays a role in processing non linear or branched viral DNA intermediates in order to promote the production of mature packaged unit-length linear progeny viral DNA molecules. Exhibits endonuclease and exonuclease activities and accepts both double-stranded and single-stranded DNA as substrate. Exonuclease digestion of DNA is in the 5'-&gt; 3' direction and the products are 5'-monophosphate nucleosides. Additionally, forms a recombinase with the major DNA-binding protein, which displays strand exchange activity. The chain is Alkaline nuclease (U70) from Homo sapiens (Human).